The sequence spans 744 residues: Cullin-3 (744 aa).

Residues 677 to 736 enclose the Cullin neddylation domain; it reads MELSAIIVRIMKTEGKLSHQQLLERTTKRTQSRLSLTPSILKRSIQLLIEKEYIQRNADD. Lys688 participates in a covalent cross-link: Glycyl lysine isopeptide (Lys-Gly) (interchain with G-Cter in NEDD8).

This sequence belongs to the cullin family. As to quaternary structure, component of a ubiquitin-protein ligase complex consisting of the cullin CUL3, the linker protein ELC1, the substrate receptor ELA1, and the RING protein HRT1. Neddylated; enhancing the ubiquitin-ligase activity.

Its pathway is protein modification; protein ubiquitination. Its function is as follows. As part of the CRL3 E3 ubiquitin ligase complex; polyubiquitylates monoubiquitylated RNA polymerase II subunit RPO21 to trigger its proteolysis; plays a role in global genomic repair. The sequence is that of Cullin-3 (CUL3) from Saccharomyces cerevisiae (strain ATCC 204508 / S288c) (Baker's yeast).